Here is a 262-residue protein sequence, read N- to C-terminus: Diaminopimelate epimerase (262 aa).

Asn-17, Gln-45, and Asn-63 together coordinate substrate. Cys-72 functions as the Proton donor in the catalytic mechanism. Residues 73–74 (GN), Asn-154, Asn-187, and 205–206 (ER) contribute to the substrate site. Cys-214 acts as the Proton acceptor in catalysis. A substrate-binding site is contributed by 215 to 216 (GS).

The protein belongs to the diaminopimelate epimerase family. In terms of assembly, homodimer.

The protein resides in the cytoplasm. The catalysed reaction is (2S,6S)-2,6-diaminopimelate = meso-2,6-diaminopimelate. It functions in the pathway amino-acid biosynthesis; L-lysine biosynthesis via DAP pathway; DL-2,6-diaminopimelate from LL-2,6-diaminopimelate: step 1/1. Catalyzes the stereoinversion of LL-2,6-diaminopimelate (L,L-DAP) to meso-diaminopimelate (meso-DAP), a precursor of L-lysine and an essential component of the bacterial peptidoglycan. The chain is Diaminopimelate epimerase from Wolbachia sp. subsp. Drosophila simulans (strain wRi).